A 199-amino-acid polypeptide reads, in one-letter code: Recombination protein RecR (199 aa).

The segment at 56–71 (CSICFNWSAEDPCEIC) adopts a C4-type zinc-finger fold. The region spanning 79–174 (STWCVVADVK…GLRMTRLAFG (96 aa)) is the Toprim domain.

This sequence belongs to the RecR family.

Functionally, may play a role in DNA repair. It seems to be involved in an RecBC-independent recombinational process of DNA repair. It may act with RecF and RecO. In Synechococcus sp. (strain JA-3-3Ab) (Cyanobacteria bacterium Yellowstone A-Prime), this protein is Recombination protein RecR.